The chain runs to 262 residues: uncharacterized protein (262 aa).

Residues histidine 7, histidine 9, glutamate 98, histidine 138, histidine 162, and aspartate 212 each contribute to the a divalent metal cation site.

It belongs to the metallo-dependent hydrolases superfamily. TatD-type hydrolase family. Requires a divalent metal cation as cofactor.

This is an uncharacterized protein from Haemophilus influenzae (strain ATCC 51907 / DSM 11121 / KW20 / Rd).